Reading from the N-terminus, the 272-residue chain is MIFNLPVSVLLYFSLIWAMEPSFVRGKNVVNLITFKDSNGKLHKRLAPEEIPPRLHNSQVNSYPLGYKGMRDFSRPAVNLDDILGTQQRKQQEFLAELSPLSLESKLSLVNEVQIFASYVRNDVETYNKVSDPNEDLIIIAPTNRAVSQLTLKPWQFPNNIDKLESDGATEKELDTAIQENISKFVRSHIVVYNDDKNSYKKVSPGCTLLQSIDFTESKKSDSETGGDILLKKEGEVYYVASSRDEKFHAVESIENGSNGVILMVDFTLVGP.

The signal sequence occupies residues 1 to 26 (MIFNLPVSVLLYFSLIWAMEPSFVRG). An FAS1 domain is found at 100 to 269 (PLSLESKLSL…GVILMVDFTL (170 aa)).

It is found in the vacuole. This chain is FAS1 domain-containing protein YDR262W, found in Saccharomyces cerevisiae (strain ATCC 204508 / S288c) (Baker's yeast).